The following is a 530-amino-acid chain: Membrane-associated transporter protein (530 aa).

Over 1–45 (MSGSNGPTDTHTYQSLAEDCPFGSVEQPKRSTGRLVMHSMAMFGR) the chain is Cytoplasmic. Residues 46-66 (EFCYAVEAAYVTPVLLSVGLP) form a helical membrane-spanning segment. The Extracellular segment spans residues 67–68 (KS). Residues 69 to 89 (LYSMVWLLSPILGFLLQPVVG) traverse the membrane as a helical segment. The Cytoplasmic portion of the chain corresponds to 90–105 (SASDHCRARWGRRRPY). Residues 106–126 (ILTLAIMMLLGMALYLNGDAV) form a helical membrane-spanning segment. Residues 127–138 (VSALVANPRQKL) are Extracellular-facing. A helical transmembrane segment spans residues 139-159 (IWAISITMVGVVLFDFSADFI). Topologically, residues 160–184 (DGPIKAYLFDVCSHQDKEKGLHYHA) are cytoplasmic. Residues 185–205 (LFTGFGGALGYILGAIDWVHL) traverse the membrane as a helical segment. Residues 206 to 216 (DLGRLLGTEFQ) are Extracellular-facing. Residues 217–237 (VMFFFSALVLILCFITHLCSI) form a helical membrane-spanning segment. Residues 238–318 (PEAPLRDAAT…ALVNMPSHYR (81 aa)) are Cytoplasmic-facing. Residues 275-299 (KNGGADTEQPVQEWKNKKPSGQSQR) are disordered. The chain crosses the membrane as a helical span at residues 319-339 (CLCVSHLIGWTAFLSNMLFFT). Over 340–366 (DFMGQIVYHGDPYGAHNSTEFLIYERG) the chain is Extracellular. N-linked (GlcNAc...) asparagine glycosylation is present at Asn356. A helical transmembrane segment spans residues 367–387 (VEVGCWGLCINSVFSSVYSYF). Topologically, residues 388–398 (QKAMVSYIGLK) are cytoplasmic. A helical membrane pass occupies residues 399-419 (GLYFMGYLLFGLGTGFIGLFP). The Extracellular portion of the chain corresponds to 420–425 (NVYSTL). Residues 426-446 (VLCSMFGVMSSTLYTVPFNLI) traverse the membrane as a helical segment. Residues 447–477 (AEYHREEEKEKGQEAPGGPDNQGRGKGVDCA) are Cytoplasmic-facing. Residues 478 to 498 (ALTCMVQLAQILVGGGLGFLV) traverse the membrane as a helical segment. The Extracellular segment spans residues 499–504 (NMAGSV). Residues 505 to 525 (VVVVITASAVSLIGCCFVALF) form a helical membrane-spanning segment. Topologically, residues 526 to 530 (VRYVD) are cytoplasmic.

The protein belongs to the glycoside-pentoside-hexuronide (GPH) cation symporter transporter (TC 2.A.2) family. As to quaternary structure, interacts with TYRP1. In terms of tissue distribution, mainly expressed in eyeballs and skin melanocytes. Also detected in kidney, colon, gall bladder and pancreas.

The protein resides in the melanosome membrane. It catalyses the reaction sucrose(out) + H(+)(out) = sucrose(in) + H(+)(in). The catalysed reaction is D-glucose(out) + H(+)(out) = D-glucose(in) + H(+)(in). Functionally, proton-associated glucose and sucrose transporter. May be able to transport also fructose. Expressed at a late melanosome maturation stage where functions as a proton/glucose exporter which increase lumenal pH by decreasing glycolysis. Regulates melanogenesis by maintaining melanosome neutralization that is initially initiated by transient OCA2 and required for a proper function of the tyrosinase TYR. This chain is Membrane-associated transporter protein (Slc45a2), found in Mus musculus (Mouse).